A 115-amino-acid polypeptide reads, in one-letter code: Flagellar transcriptional regulator FlhD (115 aa).

The protein belongs to the FlhD family. Homodimer; disulfide-linked. Forms a heterohexamer composed of two FlhC and four FlhD subunits. Each FlhC binds a FlhD dimer, forming a heterotrimer, and a hexamer assembles by dimerization of two heterotrimers.

It is found in the cytoplasm. Its function is as follows. Functions in complex with FlhC as a master transcriptional regulator that regulates transcription of several flagellar and non-flagellar operons by binding to their promoter region. Activates expression of class 2 flagellar genes, including fliA, which is a flagellum-specific sigma factor that turns on the class 3 genes. Also regulates genes whose products function in a variety of physiological pathways. The sequence is that of Flagellar transcriptional regulator FlhD from Edwardsiella ictaluri (strain 93-146).